Here is a 306-residue protein sequence, read N- to C-terminus: Aspartate carbamoyltransferase catalytic subunit (306 aa).

Arg-55 and Thr-56 together coordinate carbamoyl phosphate. Lys-84 provides a ligand contact to L-aspartate. Carbamoyl phosphate contacts are provided by Arg-105, His-133, and Gln-136. 2 residues coordinate L-aspartate: Arg-166 and Arg-227. Positions 265 and 266 each coordinate carbamoyl phosphate.

It belongs to the aspartate/ornithine carbamoyltransferase superfamily. ATCase family. As to quaternary structure, heterododecamer (2C3:3R2) of six catalytic PyrB chains organized as two trimers (C3), and six regulatory PyrI chains organized as three dimers (R2).

The catalysed reaction is carbamoyl phosphate + L-aspartate = N-carbamoyl-L-aspartate + phosphate + H(+). It functions in the pathway pyrimidine metabolism; UMP biosynthesis via de novo pathway; (S)-dihydroorotate from bicarbonate: step 2/3. Catalyzes the condensation of carbamoyl phosphate and aspartate to form carbamoyl aspartate and inorganic phosphate, the committed step in the de novo pyrimidine nucleotide biosynthesis pathway. The polypeptide is Aspartate carbamoyltransferase catalytic subunit (Aeromonas hydrophila subsp. hydrophila (strain ATCC 7966 / DSM 30187 / BCRC 13018 / CCUG 14551 / JCM 1027 / KCTC 2358 / NCIMB 9240 / NCTC 8049)).